The primary structure comprises 358 residues: Glycerophosphodiester phosphodiesterase, periplasmic (358 aa).

The signal sequence occupies residues 1-25 (MKLTLKNLSMAIMMSTIVMGSSAMA). The GP-PDE domain maps to 31–355 (KIVIAHRGAS…DFPDKAVKFL (325 aa)). His36 serves as the catalytic Proton acceptor. Glu63 and Asp65 together coordinate Ca(2+). His78 acts as the Proton donor in catalysis. Residue Glu171 coordinates Ca(2+).

Belongs to the glycerophosphoryl diester phosphodiesterase family. In terms of assembly, homodimer. Ca(2+) is required as a cofactor.

It localises to the periplasm. The catalysed reaction is a sn-glycero-3-phosphodiester + H2O = an alcohol + sn-glycerol 3-phosphate + H(+). Its function is as follows. Glycerophosphodiester phosphodiesterase hydrolyzes glycerophosphodiesters into glycerol-3-phosphate (G3P) and the corresponding alcohol. The chain is Glycerophosphodiester phosphodiesterase, periplasmic (glpQ) from Escherichia coli (strain K12).